The following is an 852-amino-acid chain: Bifunctional uridylyltransferase/uridylyl-removing enzyme (852 aa).

Residues 1–318 (MPANLSSALE…SAPMRVTLRI (318 aa)) are uridylyltransferase. Residues 319-672 (DDDYIQVNNQ…SRILFKSDSF (354 aa)) are uridylyl-removing. Residues 436–558 (VDDHILTVVR…VQTHERLSAL (123 aa)) enclose the HD domain. ACT domains lie at 673-757 (QVMV…SHSR) and 785-852 (SVEI…EQLS).

Belongs to the GlnD family. Mg(2+) serves as cofactor.

It catalyses the reaction [protein-PII]-L-tyrosine + UTP = [protein-PII]-uridylyl-L-tyrosine + diphosphate. The enzyme catalyses [protein-PII]-uridylyl-L-tyrosine + H2O = [protein-PII]-L-tyrosine + UMP + H(+). With respect to regulation, uridylyltransferase (UTase) activity is inhibited by glutamine, while glutamine activates uridylyl-removing (UR) activity. In terms of biological role, modifies, by uridylylation and deuridylylation, the PII regulatory proteins (GlnB and homologs), in response to the nitrogen status of the cell that GlnD senses through the glutamine level. Under low glutamine levels, catalyzes the conversion of the PII proteins and UTP to PII-UMP and PPi, while under higher glutamine levels, GlnD hydrolyzes PII-UMP to PII and UMP (deuridylylation). Thus, controls uridylylation state and activity of the PII proteins, and plays an important role in the regulation of nitrogen assimilation and metabolism. The polypeptide is Bifunctional uridylyltransferase/uridylyl-removing enzyme (Neisseria meningitidis serogroup A / serotype 4A (strain DSM 15465 / Z2491)).